A 373-amino-acid polypeptide reads, in one-letter code: Enoyl-[acyl-carrier-protein] reductase, mitochondrial (373 aa).

The transit peptide at 1-53 directs the protein to the mitochondrion; sequence MLVSRRLTGARARAPLLASLLEAWCRQGRTTSSYSAFSEPSHVRALVYGNHGD. Position 61 is an N6-acetyllysine; alternate (Lys61). Residue Lys61 is modified to N6-succinyllysine; alternate. Residue Tyr94 is the Proton donor of the active site. NADP(+) contacts are provided by residues Asn167, 193–196, and 216–218; these read NSGV and RDR. An N6-acetyllysine; alternate mark is found at Lys252 and Lys267. Residues Lys252 and Lys267 each carry the N6-succinyllysine; alternate modification. Residues 285–288 and 310–312 contribute to the NADP(+) site; these read YGGM and FWL. At Lys316 the chain carries N6-succinyllysine. Residue Lys368 participates in NADP(+) binding.

This sequence belongs to the zinc-containing alcohol dehydrogenase family. Quinone oxidoreductase subfamily. As to quaternary structure, homodimer. Interacts with PPARA in the nucleus and increases its activity.

The protein resides in the mitochondrion. It localises to the cytoplasm. Its subcellular location is the nucleus. It carries out the reaction a 2,3-saturated acyl-[ACP] + NADP(+) = a (2E)-enoyl-[ACP] + NADPH + H(+). The catalysed reaction is (2E)-butenoyl-[ACP] + NADPH + H(+) = butanoyl-[ACP] + NADP(+). The enzyme catalyses (2E)-hexenoyl-[ACP] + NADPH + H(+) = hexanoyl-[ACP] + NADP(+). It catalyses the reaction (2E)-octenoyl-[ACP] + NADPH + H(+) = octanoyl-[ACP] + NADP(+). It carries out the reaction (2E)-decenoyl-[ACP] + NADPH + H(+) = decanoyl-[ACP] + NADP(+). The catalysed reaction is (2E)-dodecenoyl-[ACP] + NADPH + H(+) = dodecanoyl-[ACP] + NADP(+). The enzyme catalyses (2E)-tetradecenoyl-[ACP] + NADPH + H(+) = tetradecanoyl-[ACP] + NADP(+). It catalyses the reaction (2E)-hexadecenoyl-[ACP] + NADPH + H(+) = hexadecanoyl-[ACP] + NADP(+). Its function is as follows. Catalyzes the NADPH-dependent reduction of trans-2-enoyl thioesters in mitochondrial fatty acid synthesis (fatty acid synthesis type II). Fatty acid chain elongation in mitochondria uses acyl carrier protein (ACP) as an acyl group carrier, but the enzyme accepts both ACP and CoA thioesters as substrates in vitro. Displays a preference for medium-chain over short- and long-chain substrates. May provide the octanoyl chain used for lipoic acid biosynthesis, regulating protein lipoylation and mitochondrial respiratory activity particularly in Purkinje cells. Involved in iron homeostasis; affecting Fe-S cluster assembly and ceramide metabolism. Required for proper morphology and bioenergetic functions of mitochondria. Required for maintenance of neurons. The chain is Enoyl-[acyl-carrier-protein] reductase, mitochondrial (Mecr) from Rattus norvegicus (Rat).